We begin with the raw amino-acid sequence, 201 residues long: MDKRTCNSQDVEVRKGPWTMEEDLILINYIANHGEGVWNSLARSAGLKRTGKSCRLRWLNYLRPDVRRGNITPEEQLLIMELHAKWGNRWSKIAKHLPGRTDNEIKNYWRTRIQKHIKQADQNMKKPSKCEQNDQKAISTSQASTGPTDTIDSYSPSSYTENTNNNMENITFQGNFPTETNENIWSMEDLWSLQLLNDATN.

2 consecutive HTH myb-type domains span residues 10–62 and 63–117; these read DVEV…LNYL and RPDV…QKHI. 2 consecutive DNA-binding regions (H-T-H motif) follow at residues 38-62 and 90-113; these read WNSL…LNYL and WSKI…RTRI. The tract at residues 121-170 is disordered; sequence DQNMKKPSKCEQNDQKAISTSQASTGPTDTIDSYSPSSYTENTNNNMENI. Residues 135 to 159 show a composition bias toward polar residues; sequence QKAISTSQASTGPTDTIDSYSPSSY. Low complexity predominate over residues 160 to 169; the sequence is TENTNNNMEN.

As to expression, expressed exclusively in flower organs. Accumulates mostly in flower limbs, to a lower extent in pistils and flower tubes, and, at low levels, in stamens.

The protein resides in the nucleus. MYB-type transcription factor controlling the production of volatile organic compounds (VOCs), including floral volatile benzenoids and phenylpropanoids (FVBP), in flowers of fragrant cultivars (e.g. cv. Mitchell and cv. V26) by regulating the expression of ODO1, a key regulator of the shikimate pathway, and of several biosynthetic floral scent-related genes (e.g. IGS, EGS, BSMT1, BSMT2, PAL1, PAL2, EPSPS, DAHPS, CS, CM1, ADT1 and PPA-AT). Binds to and activates the promoters of at least ODO1, IGS1 and PAL1. This is MYB-like transcription factor EOBI from Petunia hybrida (Petunia).